We begin with the raw amino-acid sequence, 135 residues long: Large ribosomal subunit protein uL16c (135 aa).

It belongs to the universal ribosomal protein uL16 family. In terms of assembly, part of the 50S ribosomal subunit.

It localises to the plastid. Its subcellular location is the chloroplast. This is Large ribosomal subunit protein uL16c from Coffea arabica (Arabian coffee).